The following is a 493-amino-acid chain: Cobyric acid synthase (493 aa).

Positions 246–440 (PIDIAVIKMP…IHGVFDGVVF (195 aa)) constitute a GATase cobBQ-type domain. Residue cysteine 326 is the Nucleophile of the active site. Histidine 432 is a catalytic residue.

This sequence belongs to the CobB/CobQ family. CobQ subfamily.

Its pathway is cofactor biosynthesis; adenosylcobalamin biosynthesis. In terms of biological role, catalyzes amidations at positions B, D, E, and G on adenosylcobyrinic A,C-diamide. NH(2) groups are provided by glutamine, and one molecule of ATP is hydrogenolyzed for each amidation. This Clostridium botulinum (strain Okra / Type B1) protein is Cobyric acid synthase.